The sequence spans 66 residues: Probable Sec-independent protein translocase protein TatE (66 aa).

The helical transmembrane segment at 1-21 (MEGISITKLLVIAVLIVLLFG) threads the bilayer. Residues 46 to 66 (ETPAAKKSDGVEAAPRVENKE) form a disordered region.

This sequence belongs to the TatA/E family. TatE subfamily.

The protein localises to the cell inner membrane. Its function is as follows. Part of the twin-arginine translocation (Tat) system that transports large folded proteins containing a characteristic twin-arginine motif in their signal peptide across membranes. TatE shares overlapping functions with TatA. This Edwardsiella ictaluri (strain 93-146) protein is Probable Sec-independent protein translocase protein TatE.